Reading from the N-terminus, the 148-residue chain is UPF0260 protein PM0539 (148 aa).

It belongs to the UPF0260 family.

The chain is UPF0260 protein PM0539 from Pasteurella multocida (strain Pm70).